The following is a 326-amino-acid chain: tRNA-dihydrouridine(20/20a) synthase (326 aa).

FMN-binding positions include 11–13 (PML) and Q63. Residue C93 is the Proton donor of the active site. Residues K132, H165, 205–207 (NGG), and 227–228 (GR) each bind FMN.

It belongs to the Dus family. DusA subfamily. It depends on FMN as a cofactor.

It catalyses the reaction 5,6-dihydrouridine(20) in tRNA + NADP(+) = uridine(20) in tRNA + NADPH + H(+). The enzyme catalyses 5,6-dihydrouridine(20) in tRNA + NAD(+) = uridine(20) in tRNA + NADH + H(+). The catalysed reaction is 5,6-dihydrouridine(20a) in tRNA + NADP(+) = uridine(20a) in tRNA + NADPH + H(+). It carries out the reaction 5,6-dihydrouridine(20a) in tRNA + NAD(+) = uridine(20a) in tRNA + NADH + H(+). Functionally, catalyzes the synthesis of 5,6-dihydrouridine (D), a modified base found in the D-loop of most tRNAs, via the reduction of the C5-C6 double bond in target uridines. Specifically modifies U20 and U20a in tRNAs. This Vibrio parahaemolyticus serotype O3:K6 (strain RIMD 2210633) protein is tRNA-dihydrouridine(20/20a) synthase.